The primary structure comprises 477 residues: D-alanyl-D-alanine carboxypeptidase DacB (477 aa).

Positions 1-20 (MRFSRFIIGLTSCIAFSVQA) are cleaved as a signal peptide. Ser-62 functions as the Acyl-ester intermediate in the catalytic mechanism. Lys-65 serves as the catalytic Proton acceptor. The absent in class-A beta-lactamases stretch occupies residues 90–263 (GNVENGVLKG…YAGAILKDEL (174 aa)). Ser-306 is an active-site residue. Substrate is bound at residue Lys-417.

This sequence belongs to the peptidase S13 family.

It is found in the periplasm. It catalyses the reaction Preferential cleavage: (Ac)2-L-Lys-D-Ala-|-D-Ala. Also transpeptidation of peptidyl-alanyl moieties that are N-acyl substituents of D-alanine.. Its pathway is cell wall biogenesis; peptidoglycan biosynthesis. Functionally, not involved in transpeptidation but exclusively catalyzes a DD-carboxypeptidase and DD-endopeptidase reaction. This is D-alanyl-D-alanine carboxypeptidase DacB (dacB) from Escherichia coli (strain K12).